Here is a 221-residue protein sequence, read N- to C-terminus: Inositol phosphorylceramide synthase regulatory subunit KEI1 (221 aa).

4 helical membrane passes run 11-31 (SFLG…ISIL), 54-74 (WIAY…LYLI), 79-99 (LLVF…TCFF), and 154-174 (ILIT…LASF). Residues 176–221 (QELLHHPKYLVDRDDVEQNLKNKPIWKRLWAKSQKGCYKLCKNLLE) are COPI vesicle-binding.

This sequence belongs to the KEI1 family. As to quaternary structure, component of the inositol phosphorylceramide synthase complex composed of at least AUR1 and KEI1. Interacts (via C-terminal region) with COP1 and SEC21. Note=The interaction with AUR1 seems to occur with the full-length protein before cleavage by KEX2 since both full-length and short chains of KEI1 interact with AUR1. Post-translationally, the precursor protein is cleaved into two polypeptide chains, KEI1N and KEI1C. The cleavage is performed in the Golgi apparatus by the KEX2 protease which recognizes residue Arg-135. Generation of KEX2 cleavage site may have been an accidental event in evolution without specific advantages or disadvantages in IPC synthesis.

It localises to the golgi apparatus membrane. Its function is as follows. Regulatory component of the inositol phosphorylceramide (ICP) synthase which catalyzes the addition of a phosphorylinositol group onto ceramide to form inositol phosphorylceramide, an essential step in sphingolipid biosynthesis. Helps the medial Golgi localization of IPC synthase in a COPI vesicle-dependent manner. The polypeptide is Inositol phosphorylceramide synthase regulatory subunit KEI1 (KEI1) (Saccharomyces cerevisiae (strain ATCC 204508 / S288c) (Baker's yeast)).